A 134-amino-acid polypeptide reads, in one-letter code: Ribosome-binding factor A (134 aa).

Belongs to the RbfA family. Monomer. Binds 30S ribosomal subunits, but not 50S ribosomal subunits or 70S ribosomes.

The protein resides in the cytoplasm. Functionally, one of several proteins that assist in the late maturation steps of the functional core of the 30S ribosomal subunit. Associates with free 30S ribosomal subunits (but not with 30S subunits that are part of 70S ribosomes or polysomes). Required for efficient processing of 16S rRNA. May interact with the 5'-terminal helix region of 16S rRNA. The protein is Ribosome-binding factor A of Parasynechococcus marenigrum (strain WH8102).